The following is a 430-amino-acid chain: tRNA-2-methylthio-N(6)-dimethylallyladenosine synthase (430 aa).

In terms of domain architecture, MTTase N-terminal spans 2 to 111 (KKIHIKTYGC…IPQAVERAIN (110 aa)). [4Fe-4S] cluster is bound by residues Cys-11, Cys-47, Cys-76, Cys-147, Cys-151, and Cys-154. Residues 133-364 (RNSKHHAWIT…LNLQKEINKQ (232 aa)) enclose the Radical SAM core domain. The TRAM domain occupies 367-428 (ENYLNKTVEI…AGPLYGDIIK (62 aa)).

It belongs to the methylthiotransferase family. MiaB subfamily. As to quaternary structure, monomer. Requires [4Fe-4S] cluster as cofactor.

Its subcellular location is the cytoplasm. The catalysed reaction is N(6)-dimethylallyladenosine(37) in tRNA + (sulfur carrier)-SH + AH2 + 2 S-adenosyl-L-methionine = 2-methylsulfanyl-N(6)-dimethylallyladenosine(37) in tRNA + (sulfur carrier)-H + 5'-deoxyadenosine + L-methionine + A + S-adenosyl-L-homocysteine + 2 H(+). Its function is as follows. Catalyzes the methylthiolation of N6-(dimethylallyl)adenosine (i(6)A), leading to the formation of 2-methylthio-N6-(dimethylallyl)adenosine (ms(2)i(6)A) at position 37 in tRNAs that read codons beginning with uridine. The sequence is that of tRNA-2-methylthio-N(6)-dimethylallyladenosine synthase from Thermosipho melanesiensis (strain DSM 12029 / CIP 104789 / BI429).